A 423-amino-acid chain; its full sequence is Maltooligosaccharide ABC transporter solute-binding lipoprotein (423 aa).

The N-terminal stretch at 1–24 is a signal peptide; sequence MSSKFMKSTAVLGTVTLASLLLVA. The N-palmitoyl cysteine moiety is linked to residue C25. C25 is lipidated: S-diacylglycerol cysteine. Residues Y52, D77, D83, 103 to 104, E148, D193, N196, 251 to 254, W274, and K307 contribute to the substrate site; these read DR and EGAG.

Belongs to the bacterial solute-binding protein 1 family.

The protein localises to the cell membrane. Its function is as follows. Part of an ABC transporter complex involved in the uptake of maltodextrins. Binds glycogen-derived linear maltooligosaccharides increasing in size from maltotriose to maltooctaose with the highest affinity for maltotriose. Has a very weak affinity for maltose. Has also a very low affinity for maltotetraitol, indicating that the binding is selective for maltooligosaccharides with an intact reducing end. The polypeptide is Maltooligosaccharide ABC transporter solute-binding lipoprotein (malX) (Streptococcus pneumoniae (strain ATCC BAA-255 / R6)).